A 500-amino-acid chain; its full sequence is Type-2 serine--tRNA ligase (500 aa).

Residue A305 participates in L-serine binding. C307 contributes to the Zn(2+) binding site. R337 provides a ligand contact to L-serine. Residues 337–339 (RYE) and 348–349 (RV) contribute to the ATP site. L-serine-binding positions include 354 to 356 (RIE) and Q401. A Zn(2+)-binding site is contributed by E356. Residue E430 coordinates ATP. An L-serine-binding site is contributed by N433. Position 459 (C459) interacts with Zn(2+). R466 contributes to the ATP binding site.

This sequence belongs to the class-II aminoacyl-tRNA synthetase family. Type-2 seryl-tRNA synthetase subfamily. As to quaternary structure, homodimer. The cofactor is Zn(2+).

It localises to the cytoplasm. It carries out the reaction tRNA(Ser) + L-serine + ATP = L-seryl-tRNA(Ser) + AMP + diphosphate + H(+). The catalysed reaction is tRNA(Sec) + L-serine + ATP = L-seryl-tRNA(Sec) + AMP + diphosphate + H(+). Its pathway is aminoacyl-tRNA biosynthesis; selenocysteinyl-tRNA(Sec) biosynthesis; L-seryl-tRNA(Sec) from L-serine and tRNA(Sec): step 1/1. Functionally, catalyzes the attachment of serine to tRNA(Ser). Is also able to aminoacylate tRNA(Sec) with serine, to form the misacylated tRNA L-seryl-tRNA(Sec), which will be further converted into selenocysteinyl-tRNA(Sec). This Methanothrix thermoacetophila (strain DSM 6194 / JCM 14653 / NBRC 101360 / PT) (Methanosaeta thermophila) protein is Type-2 serine--tRNA ligase.